A 620-amino-acid chain; its full sequence is Probable indole-3-acetic acid-amido synthetase GH3.7 (620 aa).

Belongs to the IAA-amido conjugating enzyme family. As to expression, ubiquitous.

In terms of biological role, may catalyze the synthesis of indole-3-acetic acid (IAA)-amino acid conjugates, providing a mechanism for the plant to cope with the presence of excess auxin. The sequence is that of Probable indole-3-acetic acid-amido synthetase GH3.7 (GH3.7) from Oryza sativa subsp. japonica (Rice).